The chain runs to 138 residues: Acidic phospholipase A2 Cvv-E6h (138 aa).

A signal peptide spans 1–16 (MRTLWIVAVLLLGVEG). Intrachain disulfides connect Cys42/Cys131, Cys44/Cys60, Cys59/Cys111, Cys65/Cys138, Cys66/Cys104, Cys73/Cys97, and Cys91/Cys102. Residues Tyr43, Gly45, and Gly47 each coordinate Ca(2+). His63 is an active-site residue. Asp64 lines the Ca(2+) pocket. Asp105 is a catalytic residue.

Belongs to the phospholipase A2 family. Group II subfamily. D49 sub-subfamily. Requires Ca(2+) as cofactor. Expressed by the venom gland.

It is found in the secreted. It carries out the reaction a 1,2-diacyl-sn-glycero-3-phosphocholine + H2O = a 1-acyl-sn-glycero-3-phosphocholine + a fatty acid + H(+). Functionally, snake venom phospholipase A2 (PLA2) that shows very low inhibition of ADP-induced platelet aggregation in platelet-rich plasma of human, rabbit and guinea pig. In vivo, shows efficient edema-inducing activities in rat paws. PLA2 catalyzes the calcium-dependent hydrolysis of the 2-acyl groups in 3-sn-phosphoglycerides. The sequence is that of Acidic phospholipase A2 Cvv-E6h from Crotalus viridis viridis (Prairie rattlesnake).